The sequence spans 398 residues: Glucose-1-phosphate adenylyltransferase (398 aa).

Residues Y100, G165, 180 to 181 (EK), and S191 contribute to the alpha-D-glucose 1-phosphate site.

Belongs to the bacterial/plant glucose-1-phosphate adenylyltransferase family. Homotetramer.

The catalysed reaction is alpha-D-glucose 1-phosphate + ATP + H(+) = ADP-alpha-D-glucose + diphosphate. Its pathway is glycan biosynthesis; glycogen biosynthesis. Its function is as follows. Involved in the biosynthesis of ADP-glucose, a building block required for the elongation reactions to produce glycogen. Catalyzes the reaction between ATP and alpha-D-glucose 1-phosphate (G1P) to produce pyrophosphate and ADP-Glc. This chain is Glucose-1-phosphate adenylyltransferase, found in Desulfitobacterium hafniense (strain DSM 10664 / DCB-2).